The primary structure comprises 1036 residues: Isoleucine--tRNA ligase (1036 aa).

The 'HIGH' region motif lies at 46–56; the sequence is PFATGLPHYGH. Residues 589 to 593 carry the 'KMSKS' region motif; sequence KMSKR. ATP is bound at residue lysine 592.

The protein belongs to the class-I aminoacyl-tRNA synthetase family. IleS type 2 subfamily. Monomer. The cofactor is Zn(2+).

It is found in the cytoplasm. It catalyses the reaction tRNA(Ile) + L-isoleucine + ATP = L-isoleucyl-tRNA(Ile) + AMP + diphosphate. Catalyzes the attachment of isoleucine to tRNA(Ile). As IleRS can inadvertently accommodate and process structurally similar amino acids such as valine, to avoid such errors it has two additional distinct tRNA(Ile)-dependent editing activities. One activity is designated as 'pretransfer' editing and involves the hydrolysis of activated Val-AMP. The other activity is designated 'posttransfer' editing and involves deacylation of mischarged Val-tRNA(Ile). The polypeptide is Isoleucine--tRNA ligase (Chlamydia trachomatis serovar D (strain ATCC VR-885 / DSM 19411 / UW-3/Cx)).